Here is a 567-residue protein sequence, read N- to C-terminus: Urease subunit alpha (567 aa).

A Urease domain is found at 129 to 567 (GGVDSHIHFI…LPLAQRYFLF (439 aa)). His-134, His-136, and Lys-217 together coordinate Ni(2+). Residue Lys-217 is modified to N6-carboxylysine. His-219 is a binding site for substrate. The Ni(2+) site is built by His-246 and His-272. Catalysis depends on His-320, which acts as the Proton donor. Asp-360 is a Ni(2+) binding site.

The protein belongs to the metallo-dependent hydrolases superfamily. Urease alpha subunit family. Heterotrimer of UreA (gamma), UreB (beta) and UreC (alpha) subunits. Three heterotrimers associate to form the active enzyme. It depends on Ni cation as a cofactor. Post-translationally, carboxylation allows a single lysine to coordinate two nickel ions.

Its subcellular location is the cytoplasm. The enzyme catalyses urea + 2 H2O + H(+) = hydrogencarbonate + 2 NH4(+). Its pathway is nitrogen metabolism; urea degradation; CO(2) and NH(3) from urea (urease route): step 1/1. The protein is Urease subunit alpha of Pseudomonas putida (strain ATCC 47054 / DSM 6125 / CFBP 8728 / NCIMB 11950 / KT2440).